The following is a 142-amino-acid chain: Large ribosomal subunit protein uL13 (142 aa).

This sequence belongs to the universal ribosomal protein uL13 family. As to quaternary structure, part of the 50S ribosomal subunit.

This protein is one of the early assembly proteins of the 50S ribosomal subunit, although it is not seen to bind rRNA by itself. It is important during the early stages of 50S assembly. This Hamiltonella defensa subsp. Acyrthosiphon pisum (strain 5AT) protein is Large ribosomal subunit protein uL13.